The primary structure comprises 651 residues: Gag-Pro polyprotein (651 aa).

Gly-2 carries N-myristoyl glycine; by host lipidation. The interval 93–143 (QIPSHPAPPPPSSPTHDPPDSDPQIPPPYVEPTAPQVLPVMHPHGVPPTHR) is disordered. Ser-105 is subject to Phosphoserine; by host MAPK1. The PPXY motif motif lies at 118–121 (PPPY). A PTAP/PSAP motif motif is present at residues 124-127 (PTAP). 2 consecutive CCHC-type zinc fingers follow at residues 355–372 (QPCF…DCAQ) and 378–395 (GPCP…DCPR). In terms of domain architecture, Peptidase A2 spans 476-554 (IEALLDTGAD…NNWAIIGRDA (79 aa)). Asp-481 serves as the catalytic For protease activity; shared with dimeric partner. Residues 632–651 (QLKRPMEPGDSSTTCGPLIL) form a disordered region. A compositionally biased stretch (polar residues) spans 641–651 (DSSTTCGPLIL).

Homodimer; the homodimers are part of the immature particles. Interacts with human TSG101 and NEDD4; these interactions are essential for budding and release of viral particles. As to quaternary structure, homodimer; further assembles as homohexamers. Specific enzymatic cleavages by the viral protease yield mature proteins. The polyprotein is cleaved during and after budding, this process is termed maturation. The protease is autoproteolytically processed at its N- and C-termini. Post-translationally, phosphorylation of the matrix protein p19 by MAPK1 seems to play a role in budding. In terms of processing, myristoylated. Myristoylation of the matrix (MA) domain mediates the transport and binding of Gag polyproteins to the host plasma membrane and is required for the assembly of viral particles.

The protein localises to the virion. Its function is as follows. The matrix domain targets Gag, Gag-Pro and Gag-Pro-Pol polyproteins to the plasma membrane via a multipartite membrane binding signal, that includes its myristoylated N-terminus. Functionally, matrix protein. In terms of biological role, forms the spherical core of the virus that encapsulates the genomic RNA-nucleocapsid complex. Binds strongly to viral nucleic acids and promote their aggregation. Also destabilizes the nucleic acids duplexes via highly structured zinc-binding motifs. Its function is as follows. The aspartyl protease mediates proteolytic cleavages of Gag and Gag-Pol polyproteins during or shortly after the release of the virion from the plasma membrane. Cleavages take place as an ordered, step-wise cascade to yield mature proteins. This process is called maturation. Displays maximal activity during the budding process just prior to particle release from the cell (Potential). Cleaves the translation initiation factor eIF4G leading to the inhibition of host cap-dependent translation. The protein is Gag-Pro polyprotein (gag-pro) of Human T-cell leukemia virus 1 (isolate Melanesia mel5 subtype C) (HTLV-1).